Here is a 25-residue protein sequence, read N- to C-terminus: Ranatuerin-1C (25 aa).

C19 and C25 form a disulfide bridge.

As to expression, expressed by the skin glands.

The protein resides in the secreted. Functionally, antibacterial activity against Gram-positive bacterium S.aureus (MIC=55 uM) and Gram-negative bacterium E.coli (MIC=1.5 uM). Has activity against C.albicans (MIC=58 uM). This chain is Ranatuerin-1C, found in Lithobates clamitans (Green frog).